The chain runs to 294 residues: Protease HtpX (294 aa).

A run of 2 helical transmembrane segments spans residues 4–24 (ILLFILTNLSVMIIFGIILFI) and 33–53 (FGLIIMSGVFGFGGSIISLLL). His-139 provides a ligand contact to Zn(2+). Glu-140 is an active-site residue. His-143 lines the Zn(2+) pocket. The next 2 membrane-spanning stretches (helical) occupy residues 147-167 (GDMITMTLIQGVVNTFVIFLS) and 197-217 (FFISMALEVVFGILASIITFW). Glu-223 provides a ligand contact to Zn(2+).

This sequence belongs to the peptidase M48B family. Requires Zn(2+) as cofactor.

Its subcellular location is the cell membrane. This Wigglesworthia glossinidia brevipalpis protein is Protease HtpX.